Here is a 343-residue protein sequence, read N- to C-terminus: Mas-related G-protein coupled receptor member F (343 aa).

Over 1-44 (MAGNCSWEAHSTNQNKMCPGMSEARELYSRGFLTIEQIATLPPP) the chain is Extracellular. N-linked (GlcNAc...) asparagine glycosylation occurs at Asn-4. A helical membrane pass occupies residues 45–66 (AVTNYIFLLLCLCGLVGNGLVL). The Cytoplasmic portion of the chain corresponds to 67 to 82 (WFFGFSIKRTPFSIYF). Residues 83 to 104 (LHLASADGMYLFSKAVIALLNM) traverse the membrane as a helical segment. The Extracellular portion of the chain corresponds to 105 to 123 (GTFLGSFPDYIRRVSRIVG). A helical membrane pass occupies residues 124 to 144 (LCTFFTGVSLLPAISIERCVS). The Cytoplasmic segment spans residues 145-160 (VIFPTWYWRRRPKRLS). Residues 161 to 181 (AGVCALLWMLSFLVTSIHNYF) traverse the membrane as a helical segment. Residues 182-198 (CMFLGHEAPGTVCRNMD) lie on the Extracellular side of the membrane. A helical membrane pass occupies residues 199 to 220 (IALGILLFFLFCPLMVLPCLAL). Over 221 to 241 (ILHVECRARRRQRSAKLNHVV) the chain is Cytoplasmic. Residues 242-263 (LAIVSVFLVSSIYLGIDWFLFW) form a helical membrane-spanning segment. Residues 264–273 (VFQIPAPFPE) lie on the Extracellular side of the membrane. A helical membrane pass occupies residues 274-294 (YVTDLCICINSSAKPIVYFLA). Topologically, residues 295–343 (GRDKSQRLWEPLRVVFQRALRDGAEPGDAASSTPNTVTMEMQCPSGNAS) are cytoplasmic. The tract at residues 318–343 (AEPGDAASSTPNTVTMEMQCPSGNAS) is disordered. Positions 324 to 343 (ASSTPNTVTMEMQCPSGNAS) are enriched in polar residues.

The protein belongs to the G-protein coupled receptor 1 family. Mas subfamily.

It is found in the cell membrane. Its function is as follows. Orphan receptor. May bind to a neuropeptide and may regulate nociceptor function and/or development, including the sensation or modulation of pain. This Mus musculus (Mouse) protein is Mas-related G-protein coupled receptor member F (Mrgprf).